An 8903-amino-acid chain; its full sequence is Nonribosomal peptide synthetase vlms (8903 aa).

Residues 11-84 (GSCRTTLGKV…ELADSIDEQN (74 aa)) form the Carrier 1 domain. The thiolation (T) domain 1 stretch occupies residues 13–81 (CRTTLGKVAA…TLAELADSID (69 aa)). S45 bears the O-(pantetheine 4'-phosphoryl)serine mark. Adenylation (A) domain stretches follow at residues 59-736 (GIWV…SHLP) and 989-1386 (MAAQ…IKIR). Positions 572 to 953 (VPHQLDTEKL…FLLDGVNMSI (382 aa)) are condensation (C) domain 1. The region spanning 1524-1600 (SSMSTVEQEL…QLALAAESQA (77 aa)) is the Carrier 2 domain. Residues 1529-1597 (VEQELRQIWS…TIPQLALAAE (69 aa)) are thiolation (T) domain 2. O-(pantetheine 4'-phosphoryl)serine is present on S1561. The interval 1613 to 2050 (FPLSPIQKMY…TVKELAAVSA (438 aa)) is epimerase (E) domain 1. The tract at residues 2091–2523 (DILPCSPIQQ…LLSVSEENKL (433 aa)) is condensation (C) domain 2. The interval 2546 to 2943 (MSSHADATAI…GRQDSQVKIR (398 aa)) is adenylation (A) domain 2. A Carrier 3 domain is found at 3084–3160 (LFTTAIERQL…ELALQAKMVD (77 aa)). A thiolation (T) domain 3 region spans residues 3089–3157 (IERQLRQVWS…TIPELALQAK (69 aa)). An O-(pantetheine 4'-phosphoryl)serine modification is found at S3121. The tract at residues 3174 to 3614 (FALSPIQQMY…AIKSLVEELM (441 aa)) is epimerase (E) domain 2. The segment at 3655–4093 (EDILPCSPMQ…LMSTKDIQQL (439 aa)) is condensation (C) domain 3. An adenylation (A) domain 3 region spans residues 4114 to 4512 (ERLNTQPESM…GRIDTQIKIR (399 aa)). The Carrier 4 domain maps to 4649–4725 (APRTTMEKKL…DLAEATELKC (77 aa)). Positions 4654 to 4722 (MEKKLRDLFA…ILADLAEATE (69 aa)) are thiolation (T) domain 4. S4686 is modified (O-(pantetheine 4'-phosphoryl)serine). The interval 4775–5191 (EDVYPCSPLQ…AQLQMLSEED (417 aa)) is condensation (C) domain 4. Positions 5216 to 5614 (ETMTSQPDAP…GRRDTQVKIR (399 aa)) are adenylation (A) domain 4. The 77-residue stretch at 5753–5829 (APTTAMEKRL…DLAQELEQRH (77 aa)) folds into the Carrier 5 domain. The tract at residues 5758–5826 (MEKRLQNLFC…RLGDLAQELE (69 aa)) is thiolation (T) domain 5. O-(pantetheine 4'-phosphoryl)serine is present on S5790. E5875 is a region of interest (condensation (C) domain 5). The segment at 6311–6702 (EEQMSLRPSE…GRMDGQIKIR (392 aa)) is adenylation (A) domain 5. One can recognise a Carrier 6 domain in the interval 6836–6912 (SSATNTERQL…ELAATLEVMD (77 aa)). The thiolation (T) domain 6 stretch occupies residues 6841–6909 (TERQLRQIWS…TIPELAATLE (69 aa)). S6873 carries the post-translational modification O-(pantetheine 4'-phosphoryl)serine. Residues 6923–7349 (GFFELSPIQR…YGRTIKTLVE (427 aa)) form an epimerase (E) domain 3 region. Positions 7391 to 7823 (EDILPCSPIQ…LVLTNDEAQI (433 aa)) are condensation (C) domain 6. An adenylation (A) domain 6 region spans residues 7844–8240 (EQMARKPEAQ…LDRIGTQVKI (397 aa)). Positions 8368–8444 (APISATEAVF…AMAACVSDVS (77 aa)) constitute a Carrier 7 domain. The segment at 8369–8441 (PISATEAVFC…VLHAMAACVS (73 aa)) is thiolation (T) domain 7. S8405 is subject to O-(pantetheine 4'-phosphoryl)serine. The condensation (C) domain 7 stretch occupies residues 8482–8897 (DVLPTTEFQT…MENPRSTVGH (416 aa)).

The protein belongs to the NRP synthetase family.

It participates in secondary metabolite biosynthesis. Nonribosomal peptide synthetase; part of the gene cluster that mediates the biosynthesis of verlamelin, a lipopeptide that exhibits antifungal activity against plant pathogenic fungi. Verlamelin is a cyclic hexadepsipeptide and is bridged by ester bonding between a 5-hydroxytetradecanoic acid moiety and a carboxyl group on the terminal Val of amide-bonded tetradecanoyl-hexapeptide D-allo-Thr-D-Ala-L-Pro-L-Gln-D-Tyr-L-Val. VlmA and vlmB are altogether regarded as essential components in the biosynthesis of 5-hydroxytetradecanoic acid. VlmA catalyzes the hydroxylation at position C5 of tetradecanoic acid produced in primary metabolism, while the precise function of vlmB still remains to be solved. To be loaded onto the waiting NRPS, 5-hydroxytetradecanoic acid is activated in the form of acyladenylate by the AMP-dependent ligase vlmC. VlmS seems to accept the fatty-acyl intermediate onto the initial module to further elongate amino acid residues by the downstream modules. In addition, in the last module at its C-terminus, vlmS contains a surplus condensation (C) domain that may be involved in cyclization, the last step to form verlamelin. In Lecanicillium sp, this protein is Nonribosomal peptide synthetase vlms.